A 367-amino-acid polypeptide reads, in one-letter code: tRNA pseudouridine synthase D (367 aa).

Residue D80 is the Nucleophile of the active site. Residues 156-316 form the TRUD domain; sequence GIPNWFGEQR…LKQERRALRL (161 aa).

The protein belongs to the pseudouridine synthase TruD family.

It carries out the reaction uridine(13) in tRNA = pseudouridine(13) in tRNA. Functionally, responsible for synthesis of pseudouridine from uracil-13 in transfer RNAs. The sequence is that of tRNA pseudouridine synthase D from Xanthomonas campestris pv. campestris (strain B100).